The sequence spans 711 residues: Constitutive ornithine decarboxylase (711 aa).

N6-(pyridoxal phosphate)lysine is present on Lys-347.

Belongs to the Orn/Lys/Arg decarboxylase class-I family. Pyridoxal 5'-phosphate is required as a cofactor.

The enzyme catalyses L-ornithine + H(+) = putrescine + CO2. It functions in the pathway amine and polyamine biosynthesis; putrescine biosynthesis via L-ornithine pathway; putrescine from L-ornithine: step 1/1. The sequence is that of Constitutive ornithine decarboxylase (speC) from Escherichia coli (strain K12).